Reading from the N-terminus, the 118-residue chain is Small ribosomal subunit protein uS13 (118 aa).

The segment at 94–118 (SLPVRGQRSKTNARTRKGPRKAIKK) is disordered.

Belongs to the universal ribosomal protein uS13 family. In terms of assembly, part of the 30S ribosomal subunit. Forms a loose heterodimer with protein S19. Forms two bridges to the 50S subunit in the 70S ribosome.

Located at the top of the head of the 30S subunit, it contacts several helices of the 16S rRNA. In the 70S ribosome it contacts the 23S rRNA (bridge B1a) and protein L5 of the 50S subunit (bridge B1b), connecting the 2 subunits; these bridges are implicated in subunit movement. Contacts the tRNAs in the A and P-sites. The chain is Small ribosomal subunit protein uS13 from Psychromonas ingrahamii (strain DSM 17664 / CCUG 51855 / 37).